Reading from the N-terminus, the 159-residue chain is RNA pyrophosphohydrolase (159 aa).

One can recognise a Nudix hydrolase domain in the interval 6 to 149 (GFRPNVGIIL…KREVYRRALK (144 aa)). Positions 38 to 59 (GGINDRESPEEALYRELNEEVG) match the Nudix box motif.

It belongs to the Nudix hydrolase family. RppH subfamily. It depends on a divalent metal cation as a cofactor.

Accelerates the degradation of transcripts by removing pyrophosphate from the 5'-end of triphosphorylated RNA, leading to a more labile monophosphorylated state that can stimulate subsequent ribonuclease cleavage. The polypeptide is RNA pyrophosphohydrolase (Ectopseudomonas mendocina (strain ymp) (Pseudomonas mendocina)).